Reading from the N-terminus, the 62-residue chain is Protein UL148D (62 aa).

Residues 30-50 traverse the membrane as a helical segment; sequence WWISVAIVIFIGVCLVALMYF.

The protein resides in the host membrane. The chain is Protein UL148D (UL148D) from Human cytomegalovirus (strain Merlin) (HHV-5).